Reading from the N-terminus, the 486-residue chain is dTDP-4-dehydro-6-deoxy-alpha-D-glucopyranose 2,3-dehydratase (486 aa).

DTDP-4-dehydro-6-deoxy-alpha-D-glucose contacts are provided by residues Trp66, 149–153 (TRSNY), Ser187, Trp304, Arg367, 383–385 (QCS), 388–389 (NY), and 421–424 (EGGR).

It belongs to the hexose 2,3-dehydratase family. In terms of assembly, homodimer.

It carries out the reaction dTDP-4-dehydro-6-deoxy-alpha-D-glucose = dTDP-3,4-didehydro-2,6-dideoxy-alpha-D-glucose + H2O. Its function is as follows. Involved in the biosynthesis of forosamine ((4-dimethylamino)-2,3,4,6-tetradeoxy-alpha-D-threo-hexopyranose), a highly deoxygenated sugar component of several bioactive natural products such as the insecticidal spinosyns A and D. Catalyzes the removal of the hydroxyl group at position C-2 of the hexose ring of dTDP-4-dehydro-6-deoxy-alpha-D-glucopyranose, and the oxidation of the hydroxyl group at position C-3 to form a carbonyl functionality. The product of the reaction, dTDP-2,6-dideoxy-D-glycero-hex-2-enos-4-ulose, is a highly unstable diketosugar, which spontaneously forms dTDP-3,4-didehydro-2,6-dideoxy-alpha-D-glucose. This chain is dTDP-4-dehydro-6-deoxy-alpha-D-glucopyranose 2,3-dehydratase, found in Saccharopolyspora spinosa.